The chain runs to 457 residues: Antizyme inhibitor 2 (457 aa).

The segment at 115-138 (QVAQIKYAAKHGVRLLSFDNEVEL) is necessary for polyamine uptake stimulation.

The protein belongs to the Orn/Lys/Arg decarboxylase class-II family. ODC antizyme inhibitor subfamily. In terms of assembly, monomer. Interacts with OAZ1, OAZ2 and OAZ3; this interaction disrupts the interaction between the antizyme and ODC1. Does not form a heterodimer with ODC1. In terms of processing, ubiquitinated, leading to its proteasomal degradation; a process that is reduced in presence of antizymes. May also be degraded through the lysosomal degradative pathway in a proteasomal-independent manner.

The protein resides in the nucleus. Its subcellular location is the cytoplasm. It localises to the perinuclear region. It is found in the membrane. The protein localises to the cytoplasmic vesicle. The protein resides in the endoplasmic reticulum-Golgi intermediate compartment. Its subcellular location is the golgi apparatus. It localises to the cis-Golgi network. It is found in the trans-Golgi network. The protein localises to the cytoplasmic granule. The protein resides in the cell projection. Its subcellular location is the axon. It localises to the dendrite. It is found in the perikaryon. In terms of biological role, antizyme inhibitor (AZI) protein that positively regulates ornithine decarboxylase (ODC) activity and polyamine uptake. AZI is an enzymatically inactive ODC homolog that counteracts the negative effect of ODC antizymes (AZs) OAZ1, OAZ2 and OAZ3 on ODC activity by competing with ODC for antizyme-binding. Inhibits antizyme-dependent ODC degradation and releases ODC monomers from their inactive complex with antizymes, leading to formation of the catalytically active ODC homodimer and restoring polyamine production. Participates in the morphological integrity of the trans-Golgi network (TGN) and functions as a regulator of intracellular secretory vesicle trafficking. This is Antizyme inhibitor 2 (Azin2) from Rattus norvegicus (Rat).